A 515-amino-acid polypeptide reads, in one-letter code: MPKERRSRRRPQPIIRWVSLTLTLLALCQPIQTWRCSLSLGNQQWMTTYNQEAKFSISIDQILEAHNQSPFCPRSPRYTLDFVNGYPKIYWPPPQGRRRFGARAMVTYDCEPRCPYVGADHFDCPHWDNASQADQGSFYVNHQILFLHLKQCHGIFTLTWEIWGYDPLITFSLHKIPDPPQPDFPQLNSDWVPSVRSWALLLNQTARAFPDCAICWEPSPPWAPEILVYNKTISGSGPGLALPDAQIFWVNTSLFNTTQGWHHPSQRLLFNVSQGNALLLPPISLVNLSTVSSAPPTRVRRSPVAALTLGLALSVGLTGINVAVSALSHQRLTSLIHVLEQDQQRLITAINQTHYNLLNVASVVAQNRRGLDWLYIRLGFQSLCPTINEPCCFLRIQNDSIIRLGDLQPLSQRVSTDWQWPWNWDLGLTAWVRETIHSVLSLFLLALFLLFLAPCLIKCLTSRLLKLLRQAPHFPEISFPPKPDSDYQALLPSAPEIYSHLSPTKPDYINLRPCP.

An N-terminal signal peptide occupies residues 1 to 33 (MPKERRSRRRPQPIIRWVSLTLTLLALCQPIQT). The Extracellular portion of the chain corresponds to 34–436 (WRCSLSLGNQ…GLTAWVRETI (403 aa)). N-linked (GlcNAc...) asparagine; by host glycosylation is found at Asn129 and Asn203. A CXXC motif is present at residues 212–215 (CAIC). Disulfide bonds link Cys212/Cys215, Cys212/Cys392, and Cys384/Cys391. 5 N-linked (GlcNAc...) asparagine; by host glycosylation sites follow: Asn230, Asn251, Asn256, Asn271, and Asn287. The interval 304 to 324 (VAALTLGLALSVGLTGINVAV) is fusion peptide. Coiled coils occupy residues 330–376 (QRLT…WLYI) and 388–420 (NEPCCFLRIQNDSIIRLGDLQPLSQRVSTDWQW). Asn351 carries N-linked (GlcNAc...) asparagine; by host glycosylation. Residues 365–381 (AQNRRGLDWLYIRLGFQ) form an immunosuppression region. Residues 384 to 392 (CPTINEPCC) carry the CX6CC motif. Residue Asn398 is glycosylated (N-linked (GlcNAc...) asparagine; by host). The chain crosses the membrane as a helical span at residues 437–457 (HSVLSLFLLALFLLFLAPCLI). Cys455 carries the S-palmitoyl cysteine; by host lipid modification. Topologically, residues 458–515 (KCLTSRLLKLLRQAPHFPEISFPPKPDSDYQALLPSAPEIYSHLSPTKPDYINLRPCP) are cytoplasmic.

In terms of assembly, the mature envelope protein (Env) consists of a trimer of SU-TM heterodimers attached by a labile interchain disulfide bond. Post-translationally, specific enzymatic cleavages in vivo yield mature proteins. Envelope glycoproteins are synthesized as an inactive precursor that is N-glycosylated and processed likely by host cell furin or by a furin-like protease in the Golgi to yield the mature SU and TM proteins. The cleavage site between SU and TM requires the minimal sequence [KR]-X-[KR]-R. In terms of processing, the CXXC motif is highly conserved across a broad range of retroviral envelope proteins. It is thought to participate in the formation of a labile disulfide bond possibly with the CX6CC motif present in the transmembrane protein. Isomerization of the intersubunit disulfide bond to an SU intrachain disulfide bond is thought to occur upon receptor recognition in order to allow membrane fusion. The transmembrane protein is palmitoylated.

Its subcellular location is the virion membrane. The protein localises to the host cell membrane. The surface protein (SU) attaches the virus to the host cell by binding to its receptor. This interaction triggers the refolding of the transmembrane protein (TM) and is thought to activate its fusogenic potential by unmasking its fusion peptide. Fusion occurs at the host cell plasma membrane. In terms of biological role, the transmembrane protein (TM) acts as a class I viral fusion protein. Under the current model, the protein has at least 3 conformational states: pre-fusion native state, pre-hairpin intermediate state, and post-fusion hairpin state. During viral and target cell membrane fusion, the coiled coil regions (heptad repeats) assume a trimer-of-hairpins structure, positioning the fusion peptide in close proximity to the C-terminal region of the ectodomain. The formation of this structure appears to drive apposition and subsequent fusion of viral and target cell membranes. Membranes fusion leads to delivery of the nucleocapsid into the cytoplasm. The sequence is that of Envelope glycoprotein (env) from Bos taurus (Bovine).